We begin with the raw amino-acid sequence, 318 residues long: MNNELIEYNLHFSKTIKLTFLKDWSFITVTGKDCFNYLQGQITYNLKLLKSNKHIICSHCTIDGKVLSILRLFMHNDGYAYILRKSTSKFQINELKKYSIFSHVNICQKKDIILLGIMGREARTKLLQIFKNIPHERDSVYQENDVIILKYDQPHERYLIIIKKHNLILNKILSLVDKIYHHKIWLALEIASNFPIIDYNINKKFFPQSLNLEKLNGLDLKKGCYYGQEMIAKIHFKKLNKHYLHWLSGYSYPIPKIGDNIEQKKNKNFSSCGWILSVVKLSTTKIWIQAVLKHYNHYKTNVFRIKNKINSFFYITDE.

Folate contacts are provided by Trp-24 and Trp-185.

The protein belongs to the tRNA-modifying YgfZ family.

Its subcellular location is the cytoplasm. Its function is as follows. Folate-binding protein involved in regulating the level of ATP-DnaA and in the modification of some tRNAs. It is probably a key factor in regulatory networks that act via tRNA modification, such as initiation of chromosomal replication. In Buchnera aphidicola subsp. Baizongia pistaciae (strain Bp), this protein is tRNA-modifying protein YgfZ.